The following is a 587-amino-acid chain: Inorganic phosphate transporter PHO84 (587 aa).

The Extracellular segment spans residues 1–67 (MSSVNKDTIH…FGWQQVKTIS (67 aa)). A Glycyl lysine isopeptide (Lys-Gly) (interchain with G-Cter in ubiquitin) cross-link involves residue Lys-6. The chain crosses the membrane as a helical span at residues 68–88 (IAGVGFLTDSYDIFAINLGIT). At 89 to 108 (MMSYVYWHGSMPGPSQTLLK) the chain is on the cytoplasmic side. Residues 109 to 129 (VSTSVGTVIGQFGFGTLADIV) traverse the membrane as a helical segment. The Extracellular segment spans residues 130–133 (GRKR). Residues 134-154 (IYGMELIIMIVCTILQTTVAH) traverse the membrane as a helical segment. Over 155–156 (SP) the chain is Cytoplasmic. Residues 157 to 177 (AINFVAVLTFYRIVMGIGIGG) form a helical membrane-spanning segment. At 178-201 (DYPLSSIITSEFATTKWRGAIMGA) the chain is on the extracellular side. Residues 202–222 (VFANQAWGQISGGIIALILVA) form a helical membrane-spanning segment. The Cytoplasmic portion of the chain corresponds to 223-250 (AYKGELEYANSGAECDARCQKACDQMWR). The helical transmembrane segment at 251–271 (ILIGLGTVLGLACLYFRLTIP) threads the bilayer. At 272–345 (ESPRYQLDVN…RHFGQWKYGK (74 aa)) the chain is on the extracellular side. A Glycyl lysine isopeptide (Lys-Gly) (interchain with G-Cter in ubiquitin) cross-link involves residue Lys-298. Thr-302 is subject to Phosphothreonine. 2 positions are modified to phosphoserine: Ser-303 and Ser-316. Phosphothreonine is present on Thr-317. Ser-321 is subject to Phosphoserine. Residues 346–366 (ILLGTAGSWFTLDVAFYGLSL) form a helical membrane-spanning segment. The Cytoplasmic portion of the chain corresponds to 367 to 395 (NSAVILQTIGYAGSKNVYKKLYDTAVGNL). The chain crosses the membrane as a helical span at residues 396-416 (ILICAGSLPGYWVSVFTVDII). Residues 417–419 (GRK) are Extracellular-facing. Residues 420–440 (PIQLAGFIILTALFCVIGFAY) traverse the membrane as a helical segment. The Cytoplasmic segment spans residues 441–442 (HK). The helical transmembrane segment at 443-463 (LGDHGLLALYVICQFFQNFGP) threads the bilayer. The Extracellular portion of the chain corresponds to 464–485 (NTTTFIVPGECFPTRYRSTAHG). The helical transmembrane segment at 486–506 (ISAASGKVGAIIAQTALGTLI) threads the bilayer. Over 507-522 (DHNCARDGKPTNCWLP) the chain is Cytoplasmic. The helical transmembrane segment at 523–543 (HVMEIFALFMLLGIFTTLLIP) threads the bilayer. Topologically, residues 544–587 (ETKRKTLEEINELYHDEIDPATLNFRNKNNDIESSSPSQLQHEA) are extracellular. Positions 568 to 587 (FRNKNNDIESSSPSQLQHEA) are disordered. Residues Ser-577, Ser-579, and Ser-581 each carry the phosphoserine modification.

It belongs to the major facilitator superfamily. Phosphate:H(+) symporter (TC 2.A.1.9) family. May function as a monomer. Post-translationally, phosphorylated; phosphorylation increases after phosphate addition to the growth medium. In terms of processing, ubiquitinated in a phosphate-dependent manner; ubiquitination may influence the trafficking of PHO84 to the cell membrane and serve as a signal for endocytosis and internalization.

Its subcellular location is the cell membrane. It is found in the vacuole. The catalysed reaction is phosphate(in) + H(+)(in) = phosphate(out) + H(+)(out). It catalyses the reaction Mn(2+)(in) = Mn(2+)(out). The enzyme catalyses Zn(2+)(in) = Zn(2+)(out). It carries out the reaction Cu(2+)(in) = Cu(2+)(out). The catalysed reaction is Co(2+)(in) = Co(2+)(out). Transport activity is inhibited in the presence of the protonophore carbonylcyanide m-chlorophenylhydrazone. Transport activity is inhibited by glycerol-3-phosphate. Transport activity is inhibited by phosphonoacetic acid. Signaling activity is stimulated by glycerol-3-phosphate which acts as a nontransported PHO84 agonist that can trigger PKA signaling. Signaling activity is stimulated by arsenate. Proton-coupled high-affinity transporter for external inorganic phosphate. Acts as a transceptor, a membrane protein that in addition to its transporter activity also possesses receptor-like signaling activity; mediates activation of the protein kinase A (PKA) pathway targets during growth induction, triggered by phosphate addition to cells growth-arrested due to previous phosphate starvation. Is not an essential protein, since constitutive, low affinity phosphate transporters exist in yeast. Can function as a low affinity metal transporter that transports manganese, zinc, cobalt and copper. Plays a role in manganese homeostasis predominantly under manganese surplus conditions. This is Inorganic phosphate transporter PHO84 (PHO84) from Saccharomyces cerevisiae (strain ATCC 204508 / S288c) (Baker's yeast).